Here is a 372-residue protein sequence, read N- to C-terminus: Glycerol-3-phosphate dehydrogenase [NAD(+)] (372 aa).

Over residues 1-16 (MAPSELNCTHQNQHSS) the composition is skewed to polar residues. A disordered region spans residues 1 to 23 (MAPSELNCTHQNQHSSGYDGPRS). NAD(+) contacts are provided by residues 29–34 (GSGNWG), phenylalanine 60, phenylalanine 117, lysine 140, and alanine 173. A substrate-binding site is contributed by lysine 140. The active-site Proton acceptor is lysine 225. NAD(+) is bound by residues arginine 289, lysine 318, and glutamine 320. 289-290 (RN) contributes to the substrate binding site.

It belongs to the NAD-dependent glycerol-3-phosphate dehydrogenase family.

It catalyses the reaction sn-glycerol 3-phosphate + NAD(+) = dihydroxyacetone phosphate + NADH + H(+). In Cuphea lanceolata (Cigar flower), this protein is Glycerol-3-phosphate dehydrogenase [NAD(+)] (GPDH).